A 607-amino-acid chain; its full sequence is Zinc finger protein 750 (607 aa).

A CCHC-type zinc finger spans residues 25-51 (YQCFQCPFTCNIKSHLFNHMKYNLCKN). 4 residues coordinate Zn(2+): Cys-27, Cys-30, His-43, and Cys-49. Polar residues predominate over residues 60–78 (MEQTGKASRASQHSPAFSH). 4 disordered regions span residues 60 to 133 (MEQT…DKSE), 318 to 467 (RAVQ…SSQE), 482 to 511 (QALPNTSETPEKETISNAEVSTTESPQDLE), and 575 to 607 (GQKRANNRPLRHTNKRAKVKEPSRPRRKRSQNC). Composition is skewed to basic and acidic residues over residues 79–133 (NSKE…DKSE) and 318–334 (RAVQEHNTGDKGIRESP). The segment covering 369–380 (HSGSQSHIISGS) has biased composition (low complexity). Acidic residues predominate over residues 421–432 (DKEEDEETEEEI). Residues 452–462 (HYPDRELHYDS) are compositionally biased toward basic and acidic residues. A compositionally biased stretch (polar residues) spans 496 to 507 (ISNAEVSTTESP). Basic residues predominate over residues 579–592 (ANNRPLRHTNKRAK).

Its subcellular location is the nucleus. Its function is as follows. Transcription factor involved in epidermis differentiation. The chain is Zinc finger protein 750 (znf750) from Danio rerio (Zebrafish).